The chain runs to 133 residues: Small ribosomal subunit protein uS9 (133 aa).

Residues 111–133 (PRRSESKKFGGPGARARKQKSYR) are disordered.

The protein belongs to the universal ribosomal protein uS9 family.

This Methanosphaera stadtmanae (strain ATCC 43021 / DSM 3091 / JCM 11832 / MCB-3) protein is Small ribosomal subunit protein uS9.